The primary structure comprises 499 residues: Cysteine--tRNA ligase (499 aa).

Zn(2+) is bound at residue Cys30. A 'HIGH' region motif is present at residues Pro32 to Asn42. Residues Cys221, His246, and Glu250 each coordinate Zn(2+). Positions Lys279–Ser283 match the 'KMSKS' region motif. Lys282 provides a ligand contact to ATP.

Belongs to the class-I aminoacyl-tRNA synthetase family. As to quaternary structure, monomer. Requires Zn(2+) as cofactor.

The protein localises to the cytoplasm. The catalysed reaction is tRNA(Cys) + L-cysteine + ATP = L-cysteinyl-tRNA(Cys) + AMP + diphosphate. In Cereibacter sphaeroides (strain ATCC 17023 / DSM 158 / JCM 6121 / CCUG 31486 / LMG 2827 / NBRC 12203 / NCIMB 8253 / ATH 2.4.1.) (Rhodobacter sphaeroides), this protein is Cysteine--tRNA ligase.